A 326-amino-acid polypeptide reads, in one-letter code: Putative ribose-phosphate pyrophosphokinase 2 (326 aa).

ATP-binding positions include 43–45 (DGE) and 102–103 (RQ). His-136 provides a ligand contact to Mg(2+). Residues Asp-225 and 229-233 (NTGKT) each bind D-ribose 5-phosphate.

This sequence belongs to the ribose-phosphate pyrophosphokinase family. Class I subfamily. In terms of assembly, homohexamer. The cofactor is Mg(2+).

It localises to the cytoplasm. The catalysed reaction is D-ribose 5-phosphate + ATP = 5-phospho-alpha-D-ribose 1-diphosphate + AMP + H(+). It participates in metabolic intermediate biosynthesis; 5-phospho-alpha-D-ribose 1-diphosphate biosynthesis; 5-phospho-alpha-D-ribose 1-diphosphate from D-ribose 5-phosphate (route I): step 1/1. In terms of biological role, involved in the biosynthesis of the central metabolite phospho-alpha-D-ribosyl-1-pyrophosphate (PRPP) via the transfer of pyrophosphoryl group from ATP to 1-hydroxyl of ribose-5-phosphate (Rib-5-P). The chain is Putative ribose-phosphate pyrophosphokinase 2 from Streptococcus pyogenes serotype M18 (strain MGAS8232).